The primary structure comprises 369 residues: 5-amino-6-(D-ribitylamino)uracil--L-tyrosine 4-hydroxyphenyl transferase (369 aa).

The 237-residue stretch at 56–292 (VTFVVNRNIN…AVARLYFGPL (237 aa)) folds into the Radical SAM core domain. 3 residues coordinate [4Fe-4S] cluster: Cys70, Cys74, and Cys77.

It belongs to the radical SAM superfamily. CofH family. Consists of two subunits, CofG and CofH. It depends on [4Fe-4S] cluster as a cofactor.

It carries out the reaction 5-amino-6-(D-ribitylamino)uracil + L-tyrosine + S-adenosyl-L-methionine = 5-amino-5-(4-hydroxybenzyl)-6-(D-ribitylimino)-5,6-dihydrouracil + 2-iminoacetate + 5'-deoxyadenosine + L-methionine + H(+). Its pathway is cofactor biosynthesis; coenzyme F0 biosynthesis. Functionally, catalyzes the radical-mediated synthesis of 5-amino-5-(4-hydroxybenzyl)-6-(D-ribitylimino)-5,6-dihydrouracil from 5-amino-6-(D-ribitylamino)uracil and L-tyrosine. This is 5-amino-6-(D-ribitylamino)uracil--L-tyrosine 4-hydroxyphenyl transferase from Methanopyrus kandleri (strain AV19 / DSM 6324 / JCM 9639 / NBRC 100938).